Consider the following 659-residue polypeptide: Acetyl-coenzyme A synthetase (659 aa).

CoA is bound by residues arginine 206 to lysine 209 and threonine 324. Residues glycine 400 to proline 402, aspartate 424 to threonine 429, aspartate 516, arginine 531, and arginine 542 each bind ATP. Mg(2+) is bound by residues valine 553 and histidine 555. Residue arginine 600 participates in CoA binding.

It belongs to the ATP-dependent AMP-binding enzyme family. Mg(2+) is required as a cofactor.

The catalysed reaction is acetate + ATP + CoA = acetyl-CoA + AMP + diphosphate. Functionally, catalyzes the conversion of acetate into acetyl-CoA (AcCoA), an essential intermediate at the junction of anabolic and catabolic pathways. AcsA undergoes a two-step reaction. In the first half reaction, AcsA combines acetate with ATP to form acetyl-adenylate (AcAMP) intermediate. In the second half reaction, it can then transfer the acetyl group from AcAMP to the sulfhydryl group of CoA, forming the product AcCoA. This Methanothrix thermoacetophila (strain DSM 6194 / JCM 14653 / NBRC 101360 / PT) (Methanosaeta thermophila) protein is Acetyl-coenzyme A synthetase (acsA).